The following is a 499-amino-acid chain: Glycerol kinase (499 aa).

An ADP-binding site is contributed by T12. Residues T12, T13, and S14 each coordinate ATP. Position 12 (T12) interacts with sn-glycerol 3-phosphate. ADP is bound at residue R16. Residues R82, E83, and Y134 each coordinate sn-glycerol 3-phosphate. Glycerol-binding residues include R82, E83, and Y134. The residue at position 230 (H230) is a Phosphohistidine; by HPr. D244 contacts sn-glycerol 3-phosphate. Positions 244 and 245 each coordinate glycerol. The ADP site is built by T266 and G309. T266, G309, Q313, and G410 together coordinate ATP. Residues G410 and N414 each contribute to the ADP site.

The protein belongs to the FGGY kinase family. Homotetramer and homodimer (in equilibrium). In terms of processing, the phosphoenolpyruvate-dependent sugar phosphotransferase system (PTS), including enzyme I, and histidine-containing protein (HPr) are required for the phosphorylation, which leads to the activation of the enzyme.

The catalysed reaction is glycerol + ATP = sn-glycerol 3-phosphate + ADP + H(+). It functions in the pathway polyol metabolism; glycerol degradation via glycerol kinase pathway; sn-glycerol 3-phosphate from glycerol: step 1/1. With respect to regulation, activated by phosphorylation and inhibited by fructose 1,6-bisphosphate (FBP). In terms of biological role, key enzyme in the regulation of glycerol uptake and metabolism. Catalyzes the phosphorylation of glycerol to yield sn-glycerol 3-phosphate. The polypeptide is Glycerol kinase (Staphylococcus epidermidis (strain ATCC 12228 / FDA PCI 1200)).